Consider the following 118-residue polypeptide: Late cornified envelope protein 1B (118 aa).

Residues 87 to 118 (CHRPQSSGCCSQPSGGSSCCGGGSGQHSGGCC) are disordered. A compositionally biased stretch (low complexity) spans 90–103 (PQSSGCCSQPSGGS). The span at 104-118 (SCCGGGSGQHSGGCC) shows a compositional bias: gly residues.

This sequence belongs to the LCE family. As to quaternary structure, interacts with CYSRT1; the interaction is direct. In terms of tissue distribution, skin-specific. Expression was readily detected in adult trunk skin, adult arm skin, fetal skin, penal skin, vulva, esophagus and tongue. Not expressed in the cervix, rectum, lung, colon, or placenta.

In terms of biological role, precursors of the cornified envelope of the stratum corneum. In Homo sapiens (Human), this protein is Late cornified envelope protein 1B (LCE1B).